The chain runs to 246 residues: UDP-N-acetyl-D-mannosaminuronic acid transferase (246 aa).

It belongs to the glycosyltransferase 26 family.

The enzyme catalyses UDP-N-acetyl-alpha-D-mannosaminouronate + N-acetyl-alpha-D-glucosaminyl-di-trans,octa-cis-undecaprenyl diphosphate = beta-D-ManNAcA-(1-&gt;4)-alpha-D-GlcNAc-di-trans,octa-cis-undecaprenyl diphosphate + UDP + H(+). Its pathway is bacterial outer membrane biogenesis; enterobacterial common antigen biosynthesis. Functionally, catalyzes the synthesis of Und-PP-GlcNAc-ManNAcA (Lipid II), the second lipid-linked intermediate involved in enterobacterial common antigen (ECA) synthesis. This Serratia proteamaculans (strain 568) protein is UDP-N-acetyl-D-mannosaminuronic acid transferase.